Consider the following 314-residue polypeptide: Olfactory receptor-like protein I9 (314 aa).

The Extracellular segment spans residues 1-25 (MTRRNQTAISQFFLLGLPFPPEYQH). Asn5 carries N-linked (GlcNAc...) asparagine glycosylation. The chain crosses the membrane as a helical span at residues 26-50 (LFYALFLAMYLTTLLGNLIIIILIL). Over 51–57 (LDSHLHT) the chain is Cytoplasmic. The helical transmembrane segment at 58-79 (PMYLFLSNLSFADLCFSSVTMP) threads the bilayer. Residues 80 to 100 (KLLQNMQSQVPSIPYAGCLAQ) are Extracellular-facing. Cys97 and Cys189 are disulfide-bonded. Residues 101-120 (IYFFLFFGDLGNFLLVAMAY) form a helical membrane-spanning segment. Residues 121–139 (DRYVAICFPLHYMSIMSPK) lie on the Cytoplasmic side of the membrane. The helical transmembrane segment at 140-158 (LCVSLVVLSWVLTTFHAML) threads the bilayer. At 159–196 (HTLLMARLSFCEDSVIPHYFCDMSTLLKVACSDTHDNE) the chain is on the extracellular side. The chain crosses the membrane as a helical span at residues 197–219 (LAIFILGGPIVVLPFLLIIVSYA). The Cytoplasmic portion of the chain corresponds to 220–236 (RIVSSIFKVPSSQSIHK). A helical transmembrane segment spans residues 237-260 (AFSTCGSHLSVVSLFYGTVIGLYL). Residues 261–272 (CPSANNSTVKET) lie on the Extracellular side of the membrane. The helical transmembrane segment at 273 to 292 (VMSLMYTMVTPMLNPFIYSL) threads the bilayer. The Cytoplasmic portion of the chain corresponds to 293–314 (RNRDIKDALEKIMCKKQIPSFL).

The protein belongs to the G-protein coupled receptor 1 family. In terms of tissue distribution, olfactory epithelium.

The protein localises to the cell membrane. Its function is as follows. Odorant receptor. This Rattus norvegicus (Rat) protein is Olfactory receptor-like protein I9.